Consider the following 83-residue polypeptide: Small ribosomal subunit protein bS18 (83 aa).

Belongs to the bacterial ribosomal protein bS18 family. As to quaternary structure, part of the 30S ribosomal subunit. Forms a tight heterodimer with protein bS6.

Functionally, binds as a heterodimer with protein bS6 to the central domain of the 16S rRNA, where it helps stabilize the platform of the 30S subunit. This is Small ribosomal subunit protein bS18 from Desulfosudis oleivorans (strain DSM 6200 / JCM 39069 / Hxd3) (Desulfococcus oleovorans).